Consider the following 226-residue polypeptide: NADH-ubiquinone oxidoreductase chain 6 (226 aa).

5 helical membrane-spanning segments follow: residues 2-22, 28-48, 56-76, 90-110, and 169-189; these read STLGLLLILLGIIITCTFVIL, IYSILNLIVIYGCYASILLTV, IYILVNVGAIAVLFLFIVMMI, YNIYMFVGFIGLIGIMGILIT, and IWFIMACIILLIGMVGVIYIT.

Belongs to the complex I subunit 6 family.

The protein localises to the mitochondrion membrane. It carries out the reaction a ubiquinone + NADH + 5 H(+)(in) = a ubiquinol + NAD(+) + 4 H(+)(out). Core subunit of the mitochondrial membrane respiratory chain NADH dehydrogenase (Complex I) that is believed to belong to the minimal assembly required for catalysis. Complex I functions in the transfer of electrons from NADH to the respiratory chain. The immediate electron acceptor for the enzyme is believed to be ubiquinone. The sequence is that of NADH-ubiquinone oxidoreductase chain 6 (nad6) from Dictyostelium citrinum (Slime mold).